The primary structure comprises 104 residues: MATKIRCTDEVIVLTGKYKGKRGIVIAIYSLGKAIVSGINIVKKHQKPVPALNKTGGIIEKESVIHISNLTIFNTKMNQADRVSFKTINGKKVRVFKSNGQTIN.

This sequence belongs to the universal ribosomal protein uL24 family. In terms of assembly, part of the 50S ribosomal subunit.

In terms of biological role, one of two assembly initiator proteins, it binds directly to the 5'-end of the 23S rRNA, where it nucleates assembly of the 50S subunit. Functionally, one of the proteins that surrounds the polypeptide exit tunnel on the outside of the subunit. In Baumannia cicadellinicola subsp. Homalodisca coagulata, this protein is Large ribosomal subunit protein uL24.